The sequence spans 471 residues: MQSNKTFNLEKQNHTPRKHHQHHHQQQHHQQQQQQPPPPPIPANGQQASSQNEGLTIDLKNFRKPGEKTFTQRSRLFVGNLPPDITEEEMRKLFEKYGKAGEVFIHKDKGFGFIRLETRTLAEIAKVELDNMPLRGKQLRVRFACHSASLTVRNLPQYVSNELLEEAFSVFGQVERAVVIVDDRGRPSGKGIVEFSGKPAARKALDRCSEGSFLLTTFPRPVTVEPMDQLDDEEGLPEKLVIKNQQFHKEREQPPRFAQPGSFEYEYAMRWKALIEMEKQQQDQVDRNIKEAREKLEMEMEAARHEHQVMLMRQDLMRRQEELRRMEELHNQEVQKRKQLELRQEEERRRREEEMRRQQEEMMRRQQEGFKGTFPDAREQEIRMGQMAMGGAMGINNRGAMPPAPVPAGTPAPPGPATMMPDGTLGLTPPTTERFGQAATMEGIGAIGGTPPAFNRAAPGAEFAPNKRRRY.

Methionine 1 is modified (N-acetylmethionine). A compositionally biased stretch (polar residues) spans 1–10; that stretch reads MQSNKTFNLE. Positions 1 to 51 are disordered; sequence MQSNKTFNLEKQNHTPRKHHQHHHQQQHHQQQQQQPPPPPIPANGQQASSQ. Position 5 is an N6-acetyllysine; alternate (lysine 5). Residue lysine 5 forms a Glycyl lysine isopeptide (Lys-Gly) (interchain with G-Cter in SUMO2); alternate linkage. Threonine 6 is modified (phosphothreonine). An N6-acetyllysine modification is found at lysine 11. Positions 14–27 are enriched in basic residues; sequence HTPRKHHQHHHQQQ. A DBHS region spans residues 54–373; that stretch reads GLTIDLKNFR…RRQQEGFKGT (320 aa). Glycyl lysine isopeptide (Lys-Gly) (interchain with G-Cter in SUMO2) cross-links involve residues lysine 60, lysine 96, lysine 99, and lysine 126. Positions 74 to 141 constitute an RRM 1 domain; the sequence is SRLFVGNLPP…MPLRGKQLRV (68 aa). Serine 147 is subject to Phosphoserine. Residues 148-229 form the RRM 2 domain; sequence ASLTVRNLPQ…RPVTVEPMDQ (82 aa). A Glycyl lysine isopeptide (Lys-Gly) (interchain with G-Cter in SUMO2) cross-link involves residue lysine 190. Lysine 198 carries the post-translational modification N6-acetyllysine; alternate. Lysine 198 participates in a covalent cross-link: Glycyl lysine isopeptide (Lys-Gly) (interchain with G-Cter in SUMO2); alternate. Glycyl lysine isopeptide (Lys-Gly) (interchain with G-Cter in SUMO2) cross-links involve residues lysine 243 and lysine 249. Serine 262 carries the phosphoserine modification. The stretch at 268–372 forms a coiled coil; sequence AMRWKALIEM…MRRQQEGFKG (105 aa). Lysine 295 is modified (N6-acetyllysine). The residue at position 371 (lysine 371) is an N6-acetyllysine; alternate. Residue lysine 371 forms a Glycyl lysine isopeptide (Lys-Gly) (interchain with G-Cter in SUMO2); alternate linkage. 3 positions are modified to phosphothreonine: threonine 428, threonine 440, and threonine 450. Residues 443 to 471 form a disordered region; it reads GIGAIGGTPPAFNRAAPGAEFAPNKRRRY. Arginine 456 carries the omega-N-methylarginine modification. Residue lysine 467 forms a Glycyl lysine isopeptide (Lys-Gly) (interchain with G-Cter in SUMO2) linkage.

Monomer and component of the SFPQ-NONO complex, which is probably a heterotetramer of two 52 kDa (NONO) and two 100 kDa (SFPQ) subunits. NONO is a component of spliceosome and U5.4/6 snRNP complexes. Interacts with CPNE4 (via VWFA domain). Forms heterodimers with PSPC1; this involves formation of a coiled coil domain by helices from both proteins. Part of complex consisting of SFPQ, NONO and MATR3. Part of a complex consisting of SFPQ, NONO and NR5A1. Part of a complex consisting of SFPQ, NONO and TOP1. Interacts with SPI1 and SPIB. Interacts with RNF43. Interacts with PER1 and PER2. Part of the HDP-RNP complex composed of at least HEXIM1, PRKDC, XRCC5, XRCC6, paraspeckle proteins (SFPQ, NONO, PSPC1, RBM14, and MATR3) and NEAT1 RNA. Interacts (via second RRM domain) with WASL; the interaction is direct. Component of a multiprotein complex with WASL and SFPQ. Interacts with ERCC6. Interacts (via DNA-binding domain) with TET1. As to quaternary structure, (Microbial infection) Interacts with HIV-2 Capsid protein p24; interacts with high affinity. Interacts with HIV-1 Capsid protein p24; interacts with low affinity. In terms of processing, the N-terminus is blocked. Heart, brain, placenta, lung, liver, skeletal muscle, kidney and pancreas. Also found in a number of breast tumor cell lines.

It localises to the nucleus. Its subcellular location is the nucleolus. The protein localises to the nucleus speckle. The protein resides in the chromosome. Functionally, DNA- and RNA binding protein, involved in several nuclear processes. Binds the conventional octamer sequence in double-stranded DNA. Also binds single-stranded DNA and RNA at a site independent of the duplex site. Involved in pre-mRNA splicing, probably as a heterodimer with SFPQ. Interacts with U5 snRNA, probably by binding to a purine-rich sequence located on the 3' side of U5 snRNA stem 1b. Together with PSPC1, required for the formation of nuclear paraspeckles. The SFPQ-NONO heteromer associated with MATR3 may play a role in nuclear retention of defective RNAs. The SFPQ-NONO heteromer may be involved in DNA unwinding by modulating the function of topoisomerase I/TOP1. The SFPQ-NONO heteromer may be involved in DNA non-homologous end joining (NHEJ) required for double-strand break repair and V(D)J recombination and may stabilize paired DNA ends. In vitro, the complex strongly stimulates DNA end joining, binds directly to the DNA substrates and cooperates with the Ku70/G22P1-Ku80/XRCC5 (Ku) dimer to establish a functional preligation complex. NONO is involved in transcriptional regulation. The SFPQ-NONO-NR5A1 complex binds to the CYP17 promoter and regulates basal and cAMP-dependent transcriptional activity. NONO binds to an enhancer element in long terminal repeats of endogenous intracisternal A particles (IAPs) and activates transcription. Regulates the circadian clock by repressing the transcriptional activator activity of the CLOCK-BMAL1 heterodimer. Important for the functional organization of GABAergic synapses. Plays a specific and important role in the regulation of synaptic RNAs and GPHN/gephyrin scaffold structure, through the regulation of GABRA2 transcript. Plays a key role during neuronal differentiation by recruiting TET1 to genomic loci and thereby regulating 5-hydroxymethylcytosine levels. Plays a role in the regulation of DNA virus-mediated innate immune response by assembling into the HDP-RNP complex, a complex that serves as a platform for IRF3 phosphorylation and subsequent innate immune response activation through the cGAS-STING pathway. Promotes activation of the cGAS-STING pathway in response to HIV-2 infection: acts by interacting with HIV-2 Capsid protein p24, thereby promoting detection of viral DNA by CGAS, leading to CGAS-mediated inmmune activation. In contrast, the weak interaction with HIV-1 Capsid protein p24 does not allow activation of the cGAS-STING pathway. The chain is Non-POU domain-containing octamer-binding protein from Homo sapiens (Human).